Reading from the N-terminus, the 321-residue chain is ATP phosphoribosyltransferase regulatory subunit (321 aa).

The protein belongs to the class-II aminoacyl-tRNA synthetase family. HisZ subfamily. In terms of assembly, heteromultimer composed of HisG and HisZ subunits.

It localises to the cytoplasm. Its pathway is amino-acid biosynthesis; L-histidine biosynthesis; L-histidine from 5-phospho-alpha-D-ribose 1-diphosphate: step 1/9. Required for the first step of histidine biosynthesis. May allow the feedback regulation of ATP phosphoribosyltransferase activity by histidine. This Thiobacillus denitrificans (strain ATCC 25259 / T1) protein is ATP phosphoribosyltransferase regulatory subunit.